The primary structure comprises 239 residues: ATP-dependent dethiobiotin synthetase BioD (239 aa).

15–20 (EIGKTF) is a binding site for ATP. Thr19 serves as a coordination point for Mg(2+). Lys40 is a catalytic residue. Residues Asp57, 118 to 121 (EGVG), and 178 to 179 (NH) contribute to the ATP site. The Mg(2+) site is built by Asp57 and Glu118.

It belongs to the dethiobiotin synthetase family. As to quaternary structure, homodimer. It depends on Mg(2+) as a cofactor.

It is found in the cytoplasm. The catalysed reaction is (7R,8S)-7,8-diammoniononanoate + CO2 + ATP = (4R,5S)-dethiobiotin + ADP + phosphate + 3 H(+). It functions in the pathway cofactor biosynthesis; biotin biosynthesis; biotin from 7,8-diaminononanoate: step 1/2. Its function is as follows. Catalyzes a mechanistically unusual reaction, the ATP-dependent insertion of CO2 between the N7 and N8 nitrogen atoms of 7,8-diaminopelargonic acid (DAPA, also called 7,8-diammoniononanoate) to form a ureido ring. This is ATP-dependent dethiobiotin synthetase BioD from Burkholderia multivorans (strain ATCC 17616 / 249).